Reading from the N-terminus, the 140-residue chain is Ribosome-binding factor A (140 aa).

The interval Glu115–Gly140 is disordered. The span at Ser128–Gly140 shows a compositional bias: polar residues.

Belongs to the RbfA family. As to quaternary structure, monomer. Binds 30S ribosomal subunits, but not 50S ribosomal subunits or 70S ribosomes.

The protein localises to the cytoplasm. In terms of biological role, one of several proteins that assist in the late maturation steps of the functional core of the 30S ribosomal subunit. Associates with free 30S ribosomal subunits (but not with 30S subunits that are part of 70S ribosomes or polysomes). Required for efficient processing of 16S rRNA. May interact with the 5'-terminal helix region of 16S rRNA. The protein is Ribosome-binding factor A of Synechococcus sp. (strain CC9605).